Here is a 166-residue protein sequence, read N- to C-terminus: Lipoprotein signal peptidase (166 aa).

3 helical membrane passes run 12 to 32 (WLWV…LILQ), 70 to 90 (WFFS…MYRS), and 102 to 122 (ALII…GFVV). Active-site residues include Asp-123 and Asp-141. The helical transmembrane segment at 137 to 157 (FNLADSAICIGAALIVLEGFL) threads the bilayer.

This sequence belongs to the peptidase A8 family.

It is found in the cell inner membrane. It carries out the reaction Release of signal peptides from bacterial membrane prolipoproteins. Hydrolyzes -Xaa-Yaa-Zaa-|-(S,diacylglyceryl)Cys-, in which Xaa is hydrophobic (preferably Leu), and Yaa (Ala or Ser) and Zaa (Gly or Ala) have small, neutral side chains.. It participates in protein modification; lipoprotein biosynthesis (signal peptide cleavage). Its function is as follows. This protein specifically catalyzes the removal of signal peptides from prolipoproteins. The chain is Lipoprotein signal peptidase from Klebsiella pneumoniae (strain 342).